The chain runs to 592 residues: Putative uric acid sigma-54-dependent transcriptional regulator UacR (592 aa).

One can recognise a PAS domain in the interval 158 to 229; sequence ISKIFATMID…HMQHIVSWDD (72 aa). In terms of domain architecture, Sigma-54 factor interaction spans 272–502; the sequence is LVGECRVMRQ…LSNLMEYLVN (231 aa). Residues 300–307 and 364–373 contribute to the ATP site; these read GESGTGKE and ANTGTLFLDE. A DNA-binding region (H-T-H motif) is located at residues 567-585; it reads KQVADELGIGIATLYRKIK.

Functionally, essential for both formate-dependent and formate-independent uric acid degradation. May be directly involved in the transcription of uacF in response to hypoxanthine, xanthine, and uric acid. This Escherichia coli (strain K12) protein is Putative uric acid sigma-54-dependent transcriptional regulator UacR.